The primary structure comprises 63 residues: Metallothionein-1 (63 aa).

Repeats lie at residues 23–30 (CGDKCECK) and 56–63 (CGDKCECK).

It belongs to the metallothionein superfamily. Type 9 family.

The metallothioneins are involved in the cellular sequestration of toxic metal ions. This chain is Metallothionein-1 (MT-I), found in Candida glabrata (strain ATCC 2001 / BCRC 20586 / JCM 3761 / NBRC 0622 / NRRL Y-65 / CBS 138) (Yeast).